A 391-amino-acid polypeptide reads, in one-letter code: Phosphoglycerate kinase (391 aa).

Residues D19–N21, R35, H58–R61, R117, and R150 each bind substrate. Residues K201, E323, and G349–T352 each bind ATP.

Belongs to the phosphoglycerate kinase family. Monomer.

It localises to the cytoplasm. The enzyme catalyses (2R)-3-phosphoglycerate + ATP = (2R)-3-phospho-glyceroyl phosphate + ADP. It participates in carbohydrate degradation; glycolysis; pyruvate from D-glyceraldehyde 3-phosphate: step 2/5. The chain is Phosphoglycerate kinase from Desulforapulum autotrophicum (strain ATCC 43914 / DSM 3382 / VKM B-1955 / HRM2) (Desulfobacterium autotrophicum).